The sequence spans 361 residues: Uroporphyrinogen decarboxylase (361 aa).

Residues 44 to 48 (RQAGR), aspartate 93, tyrosine 168, serine 223, and histidine 337 contribute to the substrate site.

Belongs to the uroporphyrinogen decarboxylase family. In terms of assembly, homodimer.

Its subcellular location is the cytoplasm. The enzyme catalyses uroporphyrinogen III + 4 H(+) = coproporphyrinogen III + 4 CO2. It functions in the pathway porphyrin-containing compound metabolism; protoporphyrin-IX biosynthesis; coproporphyrinogen-III from 5-aminolevulinate: step 4/4. Catalyzes the decarboxylation of four acetate groups of uroporphyrinogen-III to yield coproporphyrinogen-III. The chain is Uroporphyrinogen decarboxylase from Thermobifida fusca (strain YX).